The chain runs to 356 residues: N-acyl-phosphatidylethanolamine-hydrolyzing phospholipase D 1 (356 aa).

Residues histidine 144 and histidine 146 each coordinate Zn(2+). Tyrosine 147 provides a ligand contact to an N-acyl-1,2-diacyl-sn-glycero-3-phosphoethanolamine. The Zn(2+) site is built by aspartate 148, histidine 149, histidine 217, and aspartate 248. Histidine 286 is an an N-acyl-1,2-diacyl-sn-glycero-3-phosphoethanolamine binding site. Zn(2+) is bound at residue histidine 308.

Belongs to the NAPE-PLD family. Zn(2+) is required as a cofactor. As to expression, expressed in interneurons that are in close proximity to the primary sensory neurons. Predominantly expressed in the pharynx but can also be found in cell bodies of the dorsal and ventral nerve cords.

It carries out the reaction an N-acyl-1,2-diacyl-sn-glycero-3-phosphoethanolamine + H2O = an N-acylethanolamine + a 1,2-diacyl-sn-glycero-3-phosphate + H(+). The enzyme catalyses 1,2-dihexadecanoyl-sn-glycero-3-phospho-(N-hexadecanoyl)-ethanolamine + H2O = 1,2-dihexadecanoyl-sn-glycero-3-phosphate + N-hexadecanoylethanolamine + H(+). The catalysed reaction is N-(5Z,8Z,11Z,14Z-eicosatetraenoyl)-1,2-di-(9Z-octadecenoyl)-sn-glycero-3-phosphoethanolamine + H2O = N-(5Z,8Z,11Z,14Z-eicosatetraenoyl)-ethanolamine + 1,2-di-(9Z-octadecenoyl)-sn-glycero-3-phosphate + H(+). D-type phospholipase that hydrolyzes N-acyl-phosphatidylethanolamines (NAPEs) to produce bioactive N-acylethanolamines/fatty acid ethanolamides (NAEs/FAEs) and phosphatidic acid. NAEs are bioactive lipids that are involved in diverse physiological processes such as growth and lifespan. In Caenorhabditis elegans, this protein is N-acyl-phosphatidylethanolamine-hydrolyzing phospholipase D 1.